The chain runs to 144 residues: MNFKYIIAVSFFIASAYARRNEKDVQSLSQRDVLEEESLREIRGIGGVLLSAGKAALKGLAKVLAEKYANGKRTAEDHEVMKRLEAVMRDLDSLDHPEEASERETRGFNQEEIANLFTKKEKRILGPVLGLVGNALGGLIKKIG.

The first 18 residues, 1–18 (MNFKYIIAVSFFIASAYA), serve as a signal peptide directing secretion. Positions 19–43 (RRNEKDVQSLSQRDVLEEESLREIR) are excised as a propeptide. Asn-70 is modified (asparagine amide). The propeptide occupies 74 to 123 (TAEDHEVMKRLEAVMRDLDSLDHPEEASERETRGFNQEEIANLFTKKEKR). An Isoleucine amide modification is found at Ile-143.

It belongs to the bombinin family. As to expression, expressed by the skin glands.

The protein resides in the secreted. Maximin-4 shows antibacterial activity against both Gram-positive and Gram-negative bacteria. It also shows antimicrobial activity against the fungus C.albicans, but not against A.flavus nor P.uticale. It has little hemolytic activity. It does not possess a significant cytotoxicity against tumor cell lines. It does not possess a significant anti-HIV activity. Functionally, maximin-H3 shows antibacterial activity against both Gram-positive and Gram-negative bacteria. It also shows antimicrobial activity against the fungus C.albicans. Shows strong hemolytic activity. The polypeptide is Maximins 4/H3 type 2 (Bombina maxima (Giant fire-bellied toad)).